Here is a 190-residue protein sequence, read N- to C-terminus: MDNSTDFNSLRGLSVFLLGMMGSGKSTLGELLSRRLQYRFFDTDILIERVAGKKIREIFVDEGEATFRELETQVLAELSSLTKTVIATGGGMVLKPMNWSYLRHGLMIWLDVPLEILVKRLKQDTSRPLLQSTDLDSKLELLLEQRRGLYAEADLRIVVSDLDTPTDIVEKILTAIPTVIKDFHPERDHN.

Glycine 22–threonine 27 is an ATP binding site. Serine 26 serves as a coordination point for Mg(2+). Substrate is bound by residues aspartate 44, arginine 68, and glycine 90. Arginine 127 provides a ligand contact to ATP. Arginine 146 is a substrate binding site.

The protein belongs to the shikimate kinase family. Monomer. Requires Mg(2+) as cofactor.

It localises to the cytoplasm. It catalyses the reaction shikimate + ATP = 3-phosphoshikimate + ADP + H(+). The protein operates within metabolic intermediate biosynthesis; chorismate biosynthesis; chorismate from D-erythrose 4-phosphate and phosphoenolpyruvate: step 5/7. Functionally, catalyzes the specific phosphorylation of the 3-hydroxyl group of shikimic acid using ATP as a cosubstrate. In Microcystis aeruginosa (strain NIES-843 / IAM M-2473), this protein is Shikimate kinase.